We begin with the raw amino-acid sequence, 278 residues long: MNLTLGALNPIAFNLGGIQVHWYGIIIASAVVLATILAVQEAKRRRIDPDSIYDLILWALPVAIITARMYYVIFEWGYYQNHVDEIVRVWDGGIAIYGALIGAGIVVYLFCRANWIPVWLMLDIIAPVLIMAQGIGRWGNFMNQEAFGRITSLTFLQSLHLPHFIIQQMLIDGAYRQPTFLYESLWDILGFIVLMSLRHKKHLFKQGEVFLSYVIWYAFGRFFVEGMRTDSLMLLGIRVSQWLSVILFIGAIGILVFRRKSMRERLPDYLEGNQLSPK.

The next 4 membrane-spanning stretches (helical) occupy residues 18–38 (IQVHWYGIIIASAVVLATILA), 55–75 (LILWALPVAIITARMYYVIFE), 90–110 (WDGGIAIYGALIGAGIVVYLF), and 115–135 (WIPVWLMLDIIAPVLIMAQGI). R137 contacts a 1,2-diacyl-sn-glycero-3-phospho-(1'-sn-glycerol). 3 consecutive transmembrane segments (helical) span residues 177 to 197 (QPTFLYESLWDILGFIVLMSL), 207 to 227 (GEVFLSYVIWYAFGRFFVEGM), and 237 to 257 (IRVSQWLSVILFIGAIGILVF).

Belongs to the Lgt family.

The protein localises to the cell membrane. It catalyses the reaction L-cysteinyl-[prolipoprotein] + a 1,2-diacyl-sn-glycero-3-phospho-(1'-sn-glycerol) = an S-1,2-diacyl-sn-glyceryl-L-cysteinyl-[prolipoprotein] + sn-glycerol 1-phosphate + H(+). It functions in the pathway protein modification; lipoprotein biosynthesis (diacylglyceryl transfer). Catalyzes the transfer of the diacylglyceryl group from phosphatidylglycerol to the sulfhydryl group of the N-terminal cysteine of a prolipoprotein, the first step in the formation of mature lipoproteins. The chain is Phosphatidylglycerol--prolipoprotein diacylglyceryl transferase from Pediococcus pentosaceus (strain ATCC 25745 / CCUG 21536 / LMG 10740 / 183-1w).